The chain runs to 191 residues: Putative NADH dehydrogenase/NAD(P)H nitroreductase (191 aa).

NAD(+) is bound at residue Ala-127 to Gly-132.

Belongs to the nitroreductase family. FMN serves as cofactor.

The polypeptide is Putative NADH dehydrogenase/NAD(P)H nitroreductase (Methanothermobacter thermautotrophicus (strain ATCC 29096 / DSM 1053 / JCM 10044 / NBRC 100330 / Delta H) (Methanobacterium thermoautotrophicum)).